Consider the following 303-residue polypeptide: MPSSAQVLLCLAAVLAAAAATTAEAHSQCLDNPPDRSIHGRQLAEAGEVVHDLPGGLRAYVSGAASSSRAVVLASDVFGYEAPLLRQIVDKVAKAGYFVVVPDFLKGDYLDDKKNFTEWLEAHSPVKAAEDAKPLFAALKKEGKSVAVGGYCWGGKLSVEVGKTSDVKAVCLSHPYSVTADDMKEVKWPIEILGAQNDTTTPPKEVYRFVHVLRERHEVPFRRQDRRDGPRLHGQLVQQAPQLNEACTAPTRLNSINHSSAVIFCFDSWLPRLIFMATTSSTTVISLIFFVSMYFFSFLFAFL.

The N-terminal stretch at 1-43 (MPSSAQVLLCLAAVLAAAAATTAEAHSQCLDNPPDRSIHGRQL) is a signal peptide. Residues N115, N197, and N257 are each glycosylated (N-linked (GlcNAc...) asparagine).

In terms of processing, glycosylated.

The protein resides in the secreted. Its function is as follows. Plays a role in control of plant growth. Mediates specific degradation of cell wall (1,3)(1,4)-beta-D-glucans and is related to auxin-mediated growth and development of cereal coleoptiles. The chain is Endo-1,3;1,4-beta-D-glucanase from Zea mays (Maize).